Here is a 375-residue protein sequence, read N- to C-terminus: Actin-related protein T1 (375 aa).

This sequence belongs to the actin family.

It is found in the cytoplasm. It localises to the cytoskeleton. The protein localises to the nucleus. The protein resides in the cytoplasmic vesicle. Its subcellular location is the secretory vesicle. It is found in the acrosome. Its function is as follows. Negatively regulates the Hedgehog (SHH) signaling. Binds to the promoter of the SHH signaling mediator, GLI1, and inhibits its expression. The chain is Actin-related protein T1 (ACTRT1) from Macaca fascicularis (Crab-eating macaque).